We begin with the raw amino-acid sequence, 90 residues long: Acylphosphatase (90 aa).

One can recognise an Acylphosphatase-like domain in the interval 5–90; the sequence is CEKFVVSGIV…CREYQGFEIL (86 aa). Residues Arg-20 and Asn-38 contribute to the active site.

This sequence belongs to the acylphosphatase family.

It catalyses the reaction an acyl phosphate + H2O = a carboxylate + phosphate + H(+). The chain is Acylphosphatase (acyP) from Vibrio vulnificus (strain CMCP6).